Reading from the N-terminus, the 541-residue chain is Glucose-6-phosphate isomerase (541 aa).

Glu-353 acts as the Proton donor in catalysis. Residues His-384 and Lys-504 contribute to the active site.

It belongs to the GPI family.

It is found in the cytoplasm. It catalyses the reaction alpha-D-glucose 6-phosphate = beta-D-fructose 6-phosphate. It functions in the pathway carbohydrate biosynthesis; gluconeogenesis. The protein operates within carbohydrate degradation; glycolysis; D-glyceraldehyde 3-phosphate and glycerone phosphate from D-glucose: step 2/4. Functionally, catalyzes the reversible isomerization of glucose-6-phosphate to fructose-6-phosphate. The chain is Glucose-6-phosphate isomerase from Deinococcus radiodurans (strain ATCC 13939 / DSM 20539 / JCM 16871 / CCUG 27074 / LMG 4051 / NBRC 15346 / NCIMB 9279 / VKM B-1422 / R1).